A 786-amino-acid polypeptide reads, in one-letter code: Ribosome biogenesis protein BOP1 homolog (786 aa).

Basic residues predominate over residues 1 to 11 (MTKKLTIKRKV). The segment at 1–161 (MTKKLTIKRK…DSDTSDEEDI (161 aa)) is disordered. 4 stretches are compositionally biased toward acidic residues: residues 28 to 37 (DNEEEEEEDL), 46 to 55 (EDSTDDEGID), 62 to 74 (SSEDLEFESDEEG), and 86 to 103 (SGDDDEESAEDEEEEDDA). The segment covering 104-113 (DAKKSSKNND) has biased composition (basic and acidic residues). Residues 151–160 (ADSDTSDEED) show a composition bias toward acidic residues. WD repeat units follow at residues 447–488 (GHTD…RTIE), 490–528 (EDVVRCVAWCPNAKLSIIAVATGSRLLLVNPKVGDKLLV), 572–614 (THFK…SQIP), 617–655 (KSKGLIQCVLFHPVKPCFFVATQHNIRIYDLVKQELIKK), 658–697 (TNSKWISGMSIHPKGDNLLVSTYDKKMLWFDLDLSTKPYQ), 701–740 (LHRNAVRSVAFHLRYPLFASGSDDQAVIVSHGMVYNDLLQ), and 756–786 (REEFGVLDVNWHPVQPWVFSTGADCTIRLFT).

This sequence belongs to the WD repeat BOP1/ERB1 family.

Its subcellular location is the nucleus. The protein localises to the nucleolus. It is found in the nucleoplasm. Required for maturation of ribosomal RNAs and formation of the large ribosomal subunit. This is Ribosome biogenesis protein BOP1 homolog from Drosophila pseudoobscura pseudoobscura (Fruit fly).